We begin with the raw amino-acid sequence, 202 residues long: Probable nicotinate-nucleotide adenylyltransferase (202 aa).

It belongs to the NadD family.

The enzyme catalyses nicotinate beta-D-ribonucleotide + ATP + H(+) = deamido-NAD(+) + diphosphate. The protein operates within cofactor biosynthesis; NAD(+) biosynthesis; deamido-NAD(+) from nicotinate D-ribonucleotide: step 1/1. Catalyzes the reversible adenylation of nicotinate mononucleotide (NaMN) to nicotinic acid adenine dinucleotide (NaAD). The protein is Probable nicotinate-nucleotide adenylyltransferase of Bacteroides thetaiotaomicron (strain ATCC 29148 / DSM 2079 / JCM 5827 / CCUG 10774 / NCTC 10582 / VPI-5482 / E50).